The following is a 260-amino-acid chain: Indole-3-glycerol phosphate synthase (260 aa).

This sequence belongs to the TrpC family.

The enzyme catalyses 1-(2-carboxyphenylamino)-1-deoxy-D-ribulose 5-phosphate + H(+) = (1S,2R)-1-C-(indol-3-yl)glycerol 3-phosphate + CO2 + H2O. Its pathway is amino-acid biosynthesis; L-tryptophan biosynthesis; L-tryptophan from chorismate: step 4/5. This chain is Indole-3-glycerol phosphate synthase, found in Desulfotalea psychrophila (strain LSv54 / DSM 12343).